The sequence spans 180 residues: ATP synthase subunit delta (180 aa).

It belongs to the ATPase delta chain family. F-type ATPases have 2 components, F(1) - the catalytic core - and F(0) - the membrane proton channel. F(1) has five subunits: alpha(3), beta(3), gamma(1), delta(1), epsilon(1). F(0) has three main subunits: a(1), b(2) and c(10-14). The alpha and beta chains form an alternating ring which encloses part of the gamma chain. F(1) is attached to F(0) by a central stalk formed by the gamma and epsilon chains, while a peripheral stalk is formed by the delta and b chains.

It localises to the cell membrane. Functionally, f(1)F(0) ATP synthase produces ATP from ADP in the presence of a proton or sodium gradient. F-type ATPases consist of two structural domains, F(1) containing the extramembraneous catalytic core and F(0) containing the membrane proton channel, linked together by a central stalk and a peripheral stalk. During catalysis, ATP synthesis in the catalytic domain of F(1) is coupled via a rotary mechanism of the central stalk subunits to proton translocation. In terms of biological role, this protein is part of the stalk that links CF(0) to CF(1). It either transmits conformational changes from CF(0) to CF(1) or is implicated in proton conduction. The protein is ATP synthase subunit delta of Limosilactobacillus reuteri (strain DSM 20016) (Lactobacillus reuteri).